The chain runs to 334 residues: Serine racemase (334 aa).

Position 13 (E13) interacts with Mg(2+). ATP-binding residues include S31, S32, I33, K51, and T52. Residues K56 and S84 each act as proton acceptor in the active site. Position 56 is an N6-(pyridoxal phosphate)lysine (K56). N86 is a pyridoxal 5'-phosphate binding site. Residue Q89 participates in ATP binding. An S-nitrosocysteine modification is found at C113. Y121 is a binding site for ATP. Position 154 (N154) interacts with pyridoxal 5'-phosphate. D178 provides a ligand contact to Mg(2+). Residues G185, G186, G187, G188, and M189 each contribute to the pyridoxal 5'-phosphate site. The Mg(2+) site is built by E210, A214, D216, and N247. Ca(2+)-binding residues include E210, A214, D216, and N247. Residues E210, A214, and D216 each contribute to the Mn(2+) site. K279 contacts ATP. S313 contributes to the pyridoxal 5'-phosphate binding site. N316 serves as a coordination point for ATP.

Belongs to the serine/threonine dehydratase family. Homodimer. The cofactor is Mg(2+). Requires Mn(2+) as cofactor. Ca(2+) is required as a cofactor. Pyridoxal 5'-phosphate serves as cofactor. In terms of processing, S-nitrosylated, leading to decrease the enzyme activity.

It catalyses the reaction L-serine = D-serine. The catalysed reaction is L-serine = pyruvate + NH4(+). The enzyme catalyses D-serine = pyruvate + NH4(+). Its function is as follows. Catalyzes the synthesis of D-serine from L-serine. D-serine is a key coagonist with glutamate at NMDA receptors. Has dehydratase activity towards both L-serine and D-serine. This is Serine racemase (SRR) from Bos taurus (Bovine).